The primary structure comprises 170 residues: ATP synthase subunit b (170 aa).

The helical transmembrane segment at 11 to 31 (GLNTGDIIFQLIAMLILLALL) threads the bilayer.

The protein belongs to the ATPase B chain family. As to quaternary structure, F-type ATPases have 2 components, F(1) - the catalytic core - and F(0) - the membrane proton channel. F(1) has five subunits: alpha(3), beta(3), gamma(1), delta(1), epsilon(1). F(0) has three main subunits: a(1), b(2) and c(10-14). The alpha and beta chains form an alternating ring which encloses part of the gamma chain. F(1) is attached to F(0) by a central stalk formed by the gamma and epsilon chains, while a peripheral stalk is formed by the delta and b chains.

It localises to the cell membrane. Functionally, f(1)F(0) ATP synthase produces ATP from ADP in the presence of a proton or sodium gradient. F-type ATPases consist of two structural domains, F(1) containing the extramembraneous catalytic core and F(0) containing the membrane proton channel, linked together by a central stalk and a peripheral stalk. During catalysis, ATP synthesis in the catalytic domain of F(1) is coupled via a rotary mechanism of the central stalk subunits to proton translocation. Its function is as follows. Component of the F(0) channel, it forms part of the peripheral stalk, linking F(1) to F(0). This is ATP synthase subunit b from Bacillus pumilus (strain SAFR-032).